Here is a 299-residue protein sequence, read N- to C-terminus: S-formylglutathione hydrolase (299 aa).

2 residues coordinate Cu cation: methionine 1 and histidine 140. Catalysis depends on charge relay system residues serine 161, aspartate 241, and histidine 276.

It belongs to the esterase D family. In terms of assembly, monomer.

The protein localises to the cytoplasm. The catalysed reaction is S-formylglutathione + H2O = formate + glutathione + H(+). In terms of biological role, serine hydrolase involved in the detoxification of formaldehyde. In Saccharomyces cerevisiae (strain ATCC 204508 / S288c) (Baker's yeast), this protein is S-formylglutathione hydrolase.